The primary structure comprises 280 residues: Bifunctional protein FolD (280 aa).

NADP(+) contacts are provided by residues 159–161, Ser184, and Ile225; that span reads GRS.

The protein belongs to the tetrahydrofolate dehydrogenase/cyclohydrolase family. Homodimer.

It carries out the reaction (6R)-5,10-methylene-5,6,7,8-tetrahydrofolate + NADP(+) = (6R)-5,10-methenyltetrahydrofolate + NADPH. The catalysed reaction is (6R)-5,10-methenyltetrahydrofolate + H2O = (6R)-10-formyltetrahydrofolate + H(+). Its pathway is one-carbon metabolism; tetrahydrofolate interconversion. Its function is as follows. Catalyzes the oxidation of 5,10-methylenetetrahydrofolate to 5,10-methenyltetrahydrofolate and then the hydrolysis of 5,10-methenyltetrahydrofolate to 10-formyltetrahydrofolate. The protein is Bifunctional protein FolD of Methanosphaerula palustris (strain ATCC BAA-1556 / DSM 19958 / E1-9c).